The sequence spans 610 residues: tRNA uridine 5-carboxymethylaminomethyl modification enzyme MnmG (610 aa).

FAD is bound at residue 14 to 19; that stretch reads GAGHAG. NAD(+) is bound at residue 274-288; that stretch reads GPRYCPSIEDKIVKF.

It belongs to the MnmG family. In terms of assembly, homodimer. Heterotetramer of two MnmE and two MnmG subunits. FAD is required as a cofactor.

It localises to the cytoplasm. In terms of biological role, NAD-binding protein involved in the addition of a carboxymethylaminomethyl (cmnm) group at the wobble position (U34) of certain tRNAs, forming tRNA-cmnm(5)s(2)U34. The polypeptide is tRNA uridine 5-carboxymethylaminomethyl modification enzyme MnmG (Chlamydia muridarum (strain MoPn / Nigg)).